The following is a 587-amino-acid chain: Cyclic GMP-AMP synthase-like receptor (587 aa).

Disordered stretches follow at residues 26-48 (IHPSSADGRGLRPSTDTRGRRDD) and 77-229 (TRMH…DRPL). Basic and acidic residues-rich tracts occupy residues 95-138 (TRDR…RDSL), 150-185 (DGARPETLTPRHEDHERHNSDRDVVKGVAKVQRESL), and 204-228 (PESRPAKYKESPKQSRTTEEPHDRP). Glutamate 307, aspartate 309, and aspartate 409 together coordinate Mg(2+).

The protein belongs to the mab-21 family. Mg(2+) is required as a cofactor. The cofactor is Mn(2+).

It carries out the reaction UTP + ATP = 2',3'-cUAMP + 2 diphosphate. Functionally, nucleotidyltransferase that catalyzes the formation of cyclic UMP-AMP (2',3'-cUAMP) from ATP and UTP and plays a key role in innate immunity. Acts as a key sensor of double-stranded DNA (dsDNA), the presence of dsDNA in the cytoplasm being a danger signal that triggers the immune responses. Directly binds dsDNA, activating the nucleotidyltransferase activity, leading to synthesis of 2',3'-cUAMP, a second messenger that binds to and activates Sting, thereby triggering the immune response via activation of the NF-kappa-B transcription factor. This chain is Cyclic GMP-AMP synthase-like receptor, found in Magallana gigas (Pacific oyster).